Here is a 35-residue protein sequence, read N- to C-terminus: Photosystem II reaction center protein T (35 aa).

The chain crosses the membrane as a helical span at residues 3–23; it reads ALVYTFLLVSTLGIIFFAIFF.

This sequence belongs to the PsbT family. In terms of assembly, PSII is composed of 1 copy each of membrane proteins PsbA, PsbB, PsbC, PsbD, PsbE, PsbF, PsbH, PsbI, PsbJ, PsbK, PsbL, PsbM, PsbT, PsbY, PsbZ, Psb30/Ycf12, at least 3 peripheral proteins of the oxygen-evolving complex and a large number of cofactors. It forms dimeric complexes.

Its subcellular location is the plastid. It localises to the chloroplast thylakoid membrane. Found at the monomer-monomer interface of the photosystem II (PS II) dimer, plays a role in assembly and dimerization of PSII. PSII is a light-driven water plastoquinone oxidoreductase, using light energy to abstract electrons from H(2)O, generating a proton gradient subsequently used for ATP formation. The sequence is that of Photosystem II reaction center protein T from Schisandra chinensis (Chinese magnolia vine).